A 315-amino-acid chain; its full sequence is Homoserine O-succinyltransferase (315 aa).

The active-site Acyl-thioester intermediate is C142. Residues K163 and S192 each coordinate substrate. Catalysis depends on H235, which acts as the Proton acceptor. Residue E237 is part of the active site. Substrate is bound at residue R249.

The protein belongs to the MetA family.

It is found in the cytoplasm. The catalysed reaction is L-homoserine + succinyl-CoA = O-succinyl-L-homoserine + CoA. It participates in amino-acid biosynthesis; L-methionine biosynthesis via de novo pathway; O-succinyl-L-homoserine from L-homoserine: step 1/1. Functionally, transfers a succinyl group from succinyl-CoA to L-homoserine, forming succinyl-L-homoserine. This is Homoserine O-succinyltransferase from Tolumonas auensis (strain DSM 9187 / NBRC 110442 / TA 4).